A 345-amino-acid polypeptide reads, in one-letter code: Uroporphyrinogen decarboxylase (345 aa).

Residues Arg27–Arg31, Phe46, Asp76, Tyr152, Ser207, and His320 contribute to the substrate site.

It belongs to the uroporphyrinogen decarboxylase family. In terms of assembly, homodimer.

Its subcellular location is the cytoplasm. The catalysed reaction is uroporphyrinogen III + 4 H(+) = coproporphyrinogen III + 4 CO2. It functions in the pathway porphyrin-containing compound metabolism; protoporphyrin-IX biosynthesis; coproporphyrinogen-III from 5-aminolevulinate: step 4/4. Catalyzes the decarboxylation of four acetate groups of uroporphyrinogen-III to yield coproporphyrinogen-III. In Geobacillus thermodenitrificans (strain NG80-2), this protein is Uroporphyrinogen decarboxylase.